A 399-amino-acid chain; its full sequence is Serine palmitoyltransferase (399 aa).

Pyridoxal 5'-phosphate is bound by residues 113 to 114, His213, Thr241, and Ser243; that span reads GF. Lys244 carries the N6-(pyridoxal phosphate)lysine modification.

This sequence belongs to the class-II pyridoxal-phosphate-dependent aminotransferase family. In terms of assembly, homodimer. Pyridoxal 5'-phosphate is required as a cofactor.

It is found in the cytoplasm. It catalyses the reaction L-serine + hexadecanoyl-CoA + H(+) = 3-oxosphinganine + CO2 + CoA. The protein operates within lipid metabolism; sphingolipid metabolism. In terms of biological role, catalyzes the condensation of L-serine with palmitoyl-CoA (hexadecanoyl-CoA) to produce 3-oxosphinganine. This chain is Serine palmitoyltransferase, found in Sphingobacterium spiritivorum (Flavobacterium spiritivorum).